Here is a 263-residue protein sequence, read N- to C-terminus: HTH-type transcriptional repressor NanR (263 aa).

Residues 1-21 (MGLMNAFDSQTEDSSPVIGRN) form a disordered region. Residues 30-98 (KKLSEMVEEE…NGERARVSRP (69 aa)) form the HTH gntR-type domain. Positions 58-77 (ERELMAFFNVGRPSVREALA) form a DNA-binding region, H-T-H motif.

The protein belongs to the NanR family.

Functionally, transcriptional repressor that controls expression of the genes required for the catabolism of sialic acids. The sequence is that of HTH-type transcriptional repressor NanR from Escherichia coli O7:K1 (strain IAI39 / ExPEC).